The primary structure comprises 168 residues: Shikimate kinase (168 aa).

An ATP-binding site is contributed by 11–16 (GAGKTT). Residue Thr15 participates in Mg(2+) binding. Substrate-binding residues include Asp33, Arg57, and Gly78. Residue Arg118 participates in ATP binding. Arg136 lines the substrate pocket. Residue Arg153 participates in ATP binding.

The protein belongs to the shikimate kinase family. As to quaternary structure, monomer. The cofactor is Mg(2+).

The protein localises to the cytoplasm. The enzyme catalyses shikimate + ATP = 3-phosphoshikimate + ADP + H(+). It functions in the pathway metabolic intermediate biosynthesis; chorismate biosynthesis; chorismate from D-erythrose 4-phosphate and phosphoenolpyruvate: step 5/7. In terms of biological role, catalyzes the specific phosphorylation of the 3-hydroxyl group of shikimic acid using ATP as a cosubstrate. This chain is Shikimate kinase, found in Enterococcus faecalis (strain ATCC 700802 / V583).